Here is a 765-residue protein sequence, read N- to C-terminus: MQFDEEWSKADPIVHALLHQKSVTPAAWQDLFYHVYKITSWVDDGPLKIRDILTRCINDYVHEANKRIRSLQTDGSLLIGYIKEWNRFYQQANILPLPFKKIDESSRRRSVPETPEESIRTVMLEKWNEIIFMNISEQLLVEALRLVKEERDGNIIDAQNVIGIRESFVALNDRAGEDPLLVYRQSFERQFIEQTTEYYKKICGNLLNELGVLEYMVYADKKLEEEQQRAKRYLEMNSPTSGKHMEKAVIALVESFEDTILAECSKLIASKDVERLQRLYRLIRRTRSGIDTVLKCIDTHIRTEGLNDMRNNAENLSTDPERYVQQLLLMFDKFSSLVREGFCDDARLLTARDKAFRAVVNDSSIFKTEMMNKKGRTLSVESKCAELLANYCDLLLRKTQLSKKLTSEEIDEKLNQVLLVLKYVENKDVFMRFHRAHLSRRLILEMSADQEKEEMMVTKLRECGMPSDAVNKLSRMLQDIELNKDMNSSFKKALTGTNNNKSIADSINMKVLNGGAWGRGGSERIRFSLPRELEDFVPEMEAFYKKQHNGRKLCWMHHWSSGTMVFGTANGGRFDLECTTFQMAVLFCFNDRAHDKISLETLRLATELPDAELNRTLLSLVAYPKMRYQILLCDVPSTTVTARDFTDSTKFLINHDFNVVKNGKSQQRGKVNLIGRLQLSLEANAEKEHESIVALRELRVQEGIVKILKTRKTYTLAQLTMELVEILKPLFIPNRKIIKEQIDWLIENKYMERRADDINTFVYIS.

The Cullin neddylation domain maps to 696 to 757 (RELRVQEGIV…NKYMERRADD (62 aa)). Lys709 is covalently cross-linked (Glycyl lysine isopeptide (Lys-Gly) (interchain with G-Cter in NEDD8)).

Belongs to the cullin family. As to quaternary structure, interacts with rbx-1 and rbx-2. Post-translationally, neddylated; which enhances the ubiquitination activity of SCF-like complex.

The protein operates within protein modification; protein ubiquitination. Its function is as follows. Probable core component of cullin-based SCF-like E3 ubiquitin-protein ligase complexes which mediate the ubiquitination and subsequent proteasomal degradation of target proteins. In association with rbx-2 seems to be involved in meiotic cell cycle progression in the germline. Required for phosphorylation of the MAP kinase MPK-1 in the germline. This is Cullin-5 (cul-5) from Caenorhabditis elegans.